The following is a 527-amino-acid chain: Probable T-complex protein 1 subunit beta (527 aa).

This sequence belongs to the TCP-1 chaperonin family. In terms of assembly, heterooligomeric complex of about 850 to 900 kDa that forms two stacked rings, 12 to 16 nm in diameter.

The protein localises to the cytoplasm. In terms of biological role, molecular chaperone; assists the folding of proteins upon ATP hydrolysis. Known to play a role, in vitro, in the folding of actin and tubulin. In Schizosaccharomyces pombe (strain 972 / ATCC 24843) (Fission yeast), this protein is Probable T-complex protein 1 subunit beta (cct2).